Reading from the N-terminus, the 372-residue chain is Dof zinc finger protein DOF5.6 (372 aa).

The Dof-type zinc-finger motif lies at 73–127 (QKCPRCESTHTKFCYYNNYSLSQPRYFCKTCRRYWTKGGTLRNIPVGGGCRKNKK). Positions 75, 78, 100, and 103 each coordinate Zn(2+). The segment at 117–146 (PVGGGCRKNKKPSSSNSSSSTSSGKKPSNI) is disordered. Residues 128 to 145 (PSSSNSSSSTSSGKKPSN) show a composition bias toward low complexity.

In terms of tissue distribution, the PEAR proteins (e.g. DOF2.4, DOF5.1, DOF3.2, DOF1.1, DOF5.6 and DOF5.3) form a short-range concentration gradient that peaks at protophloem sieve elements (PSE). Preferentially expressed in the vasculature of all organs, including seedlings, roots, stems, buds, leaves, flowers and siliques, and particularly in the cambium, phloem and interfascicular parenchyma cells of inflorescence stems.

It is found in the nucleus. In terms of biological role, transcription factor that binds specifically to a 5'-AA[AG]G-3' consensus core sequence. Promotes expression. The PEAR proteins (e.g. DOF2.4, DOF5.1, DOF3.2, DOF1.1, DOF5.6 and DOF5.3) activate gene expression that promotes radial growth of protophloem sieve elements. Involved in the regulation of interfascicular cambium formation and vascular tissue development, particularly at a very early stage during inflorescence stem development; promotes both cambium activity and phloem specification, but prevents xylem specification. This chain is Dof zinc finger protein DOF5.6, found in Arabidopsis thaliana (Mouse-ear cress).